Here is a 257-residue protein sequence, read N- to C-terminus: Phosphonates import ATP-binding protein PhnC (257 aa).

An ABC transporter domain is found at isoleucine 2–alanine 246. Position 35–42 (glycine 35–serine 42) interacts with ATP.

This sequence belongs to the ABC transporter superfamily. Phosphonates importer (TC 3.A.1.9.1) family. The complex is composed of two ATP-binding proteins (PhnC), two transmembrane proteins (PhnE) and a solute-binding protein (PhnD).

It is found in the cell membrane. The catalysed reaction is phosphonate(out) + ATP + H2O = phosphonate(in) + ADP + phosphate + H(+). Its function is as follows. Part of the ABC transporter complex PhnCDE involved in phosphonates import. Responsible for energy coupling to the transport system. This chain is Phosphonates import ATP-binding protein PhnC, found in Bacillus cereus (strain ZK / E33L).